The following is a 490-amino-acid chain: Betaine aldehyde dehydrogenase (490 aa).

K(+) contacts are provided by Ile-27 and Asp-93. NAD(+) is bound at residue Gly-150–Trp-152. Lys-162 serves as the catalytic Charge relay system. NAD(+) is bound at residue Lys-176 to Glu-179. Val-180 is a binding site for K(+). An NAD(+)-binding site is contributed by Gly-230–Thr-233. Leu-246 provides a ligand contact to K(+). The active-site Proton acceptor is Glu-252. The NAD(+) site is built by Gly-254, Cys-286, and Glu-387. The Nucleophile role is filled by Cys-286. A Cysteine sulfenic acid (-SOH) modification is found at Cys-286. K(+) contacts are provided by Lys-457 and Gly-460. Glu-464 acts as the Charge relay system in catalysis.

Belongs to the aldehyde dehydrogenase family. As to quaternary structure, dimer of dimers. Requires K(+) as cofactor.

It catalyses the reaction betaine aldehyde + NAD(+) + H2O = glycine betaine + NADH + 2 H(+). It functions in the pathway amine and polyamine biosynthesis; betaine biosynthesis via choline pathway; betaine from betaine aldehyde: step 1/1. Involved in the biosynthesis of the osmoprotectant glycine betaine. Catalyzes the irreversible oxidation of betaine aldehyde to the corresponding acid. This Pseudomonas entomophila (strain L48) protein is Betaine aldehyde dehydrogenase.